Here is a 219-residue protein sequence, read N- to C-terminus: Imidazole glycerol phosphate synthase subunit HisH (219 aa).

The region spanning Thr-4–Asn-216 is the Glutamine amidotransferase type-1 domain. Catalysis depends on Cys-82, which acts as the Nucleophile. Active-site residues include His-191 and Glu-193.

In terms of assembly, heterodimer of HisH and HisF.

The protein resides in the cytoplasm. The catalysed reaction is 5-[(5-phospho-1-deoxy-D-ribulos-1-ylimino)methylamino]-1-(5-phospho-beta-D-ribosyl)imidazole-4-carboxamide + L-glutamine = D-erythro-1-(imidazol-4-yl)glycerol 3-phosphate + 5-amino-1-(5-phospho-beta-D-ribosyl)imidazole-4-carboxamide + L-glutamate + H(+). The enzyme catalyses L-glutamine + H2O = L-glutamate + NH4(+). Its pathway is amino-acid biosynthesis; L-histidine biosynthesis; L-histidine from 5-phospho-alpha-D-ribose 1-diphosphate: step 5/9. IGPS catalyzes the conversion of PRFAR and glutamine to IGP, AICAR and glutamate. The HisH subunit catalyzes the hydrolysis of glutamine to glutamate and ammonia as part of the synthesis of IGP and AICAR. The resulting ammonia molecule is channeled to the active site of HisF. The polypeptide is Imidazole glycerol phosphate synthase subunit HisH (Renibacterium salmoninarum (strain ATCC 33209 / DSM 20767 / JCM 11484 / NBRC 15589 / NCIMB 2235)).